The primary structure comprises 464 residues: Trigger factor (464 aa).

Residues 166-245 enclose the PPIase FKBP-type domain; the sequence is GDFLTIDITA…VKAVKERELP (80 aa). Residues 426 to 464 are disordered; sequence FVRPGGEEEAPAAEVTEADTAEGEATEVPAEDEKAEAKA. Acidic residues predominate over residues 432–455; it reads EEEAPAAEVTEADTAEGEATEVPA.

The protein belongs to the FKBP-type PPIase family. Tig subfamily.

It localises to the cytoplasm. The enzyme catalyses [protein]-peptidylproline (omega=180) = [protein]-peptidylproline (omega=0). In terms of biological role, involved in protein export. Acts as a chaperone by maintaining the newly synthesized protein in an open conformation. Functions as a peptidyl-prolyl cis-trans isomerase. This chain is Trigger factor, found in Pseudarthrobacter chlorophenolicus (strain ATCC 700700 / DSM 12829 / CIP 107037 / JCM 12360 / KCTC 9906 / NCIMB 13794 / A6) (Arthrobacter chlorophenolicus).